The following is a 338-amino-acid chain: Fructose-1,6-bisphosphatase class 1 (338 aa).

Residues Glu-92, Asp-114, Leu-116, and Asp-117 each coordinate Mg(2+). Substrate is bound by residues 117-120 (DGSS) and Asn-210. Mg(2+) is bound at residue Glu-284.

This sequence belongs to the FBPase class 1 family. As to quaternary structure, homotetramer. It depends on Mg(2+) as a cofactor.

The protein resides in the cytoplasm. It catalyses the reaction beta-D-fructose 1,6-bisphosphate + H2O = beta-D-fructose 6-phosphate + phosphate. It functions in the pathway carbohydrate biosynthesis; gluconeogenesis. This Halorhodospira halophila (strain DSM 244 / SL1) (Ectothiorhodospira halophila (strain DSM 244 / SL1)) protein is Fructose-1,6-bisphosphatase class 1.